Reading from the N-terminus, the 238-residue chain is 2-C-methyl-D-erythritol 4-phosphate cytidylyltransferase (238 aa).

Belongs to the IspD/TarI cytidylyltransferase family. IspD subfamily.

The enzyme catalyses 2-C-methyl-D-erythritol 4-phosphate + CTP + H(+) = 4-CDP-2-C-methyl-D-erythritol + diphosphate. Its pathway is isoprenoid biosynthesis; isopentenyl diphosphate biosynthesis via DXP pathway; isopentenyl diphosphate from 1-deoxy-D-xylulose 5-phosphate: step 2/6. Its function is as follows. Catalyzes the formation of 4-diphosphocytidyl-2-C-methyl-D-erythritol from CTP and 2-C-methyl-D-erythritol 4-phosphate (MEP). The chain is 2-C-methyl-D-erythritol 4-phosphate cytidylyltransferase from Acinetobacter baumannii (strain ACICU).